The primary structure comprises 200 residues: dITP/XTP pyrophosphatase (200 aa).

Position 7 to 12 (Thr-7 to Lys-12) interacts with substrate. 2 residues coordinate Mg(2+): Glu-38 and Asp-73. Asp-73 (proton acceptor) is an active-site residue. Residues Ser-74, Phe-154–Asp-157, Lys-177, and His-182–Arg-183 contribute to the substrate site.

The protein belongs to the HAM1 NTPase family. In terms of assembly, homodimer. The cofactor is Mg(2+).

It catalyses the reaction XTP + H2O = XMP + diphosphate + H(+). It carries out the reaction dITP + H2O = dIMP + diphosphate + H(+). The catalysed reaction is ITP + H2O = IMP + diphosphate + H(+). Functionally, pyrophosphatase that catalyzes the hydrolysis of nucleoside triphosphates to their monophosphate derivatives, with a high preference for the non-canonical purine nucleotides XTP (xanthosine triphosphate), dITP (deoxyinosine triphosphate) and ITP. Seems to function as a house-cleaning enzyme that removes non-canonical purine nucleotides from the nucleotide pool, thus preventing their incorporation into DNA/RNA and avoiding chromosomal lesions. The protein is dITP/XTP pyrophosphatase of Campylobacter jejuni subsp. doylei (strain ATCC BAA-1458 / RM4099 / 269.97).